Consider the following 102-residue polypeptide: Plastocyanin (102 aa).

The Plastocyanin-like domain occupies 1–102 (AKVEVGDEVG…ANMKGTLTVK (102 aa)). 4 residues coordinate Cu cation: histidine 37, cysteine 87, histidine 90, and methionine 95.

It belongs to the plastocyanin family. It depends on Cu(2+) as a cofactor.

Its subcellular location is the plastid. The protein resides in the chloroplast thylakoid membrane. Functionally, participates in electron transfer between P700 and the cytochrome b6-f complex in photosystem I. This chain is Plastocyanin (PETE), found in Dryopteris crassirhizoma (Thick stemmed wood fern).